The chain runs to 483 residues: Regulatory protein ViaA (483 aa).

The protein belongs to the ViaA family. In terms of assembly, homodimer. Interacts with RavA.

It localises to the cytoplasm. In terms of biological role, component of the RavA-ViaA chaperone complex, which may act on the membrane to optimize the function of some of the respiratory chains. ViaA stimulates the ATPase activity of RavA. This Salmonella dublin (strain CT_02021853) protein is Regulatory protein ViaA.